Consider the following 1313-residue polypeptide: Histone-lysine N-methyltransferase, H3 lysine-4 specific (1313 aa).

Disordered regions lie at residues Met-1–Arg-205, Lys-400–His-458, Gly-555–Leu-607, Ile-667–Asp-792, Glu-842–Gln-908, and Ala-932–Leu-982. Residues Ala-7 to Arg-18 are compositionally biased toward low complexity. The span at Ala-19 to Arg-31 shows a compositional bias: basic and acidic residues. The span at His-70–Ala-80 shows a compositional bias: polar residues. A compositionally biased stretch (low complexity) spans Ser-105–Thr-121. Polar residues-rich tracts occupy residues Ser-130–Leu-158 and Asn-174–Asp-186. Residues Gly-194–Ser-204 show a composition bias toward basic and acidic residues. Residues Arg-559–Leu-607 are compositionally biased toward basic and acidic residues. Basic residues predominate over residues Arg-702–His-716. Over residues Met-758 to Thr-784 the composition is skewed to basic and acidic residues. The segment covering Leu-843–Pro-855 has biased composition (polar residues). Over residues Ala-868–Arg-884 the composition is skewed to basic and acidic residues. The span at Pro-895–Lys-907 shows a compositional bias: basic residues. The segment covering Leu-960 to Leu-978 has biased composition (basic and acidic residues). The RxxxRR motif motif lies at Arg-1137–Arg-1142. The region spanning Lys-1171–Lys-1288 is the SET domain. Residue Tyr-1287 participates in S-adenosyl-L-methionine binding. One can recognise a Post-SET domain in the interval Asp-1297 to Asn-1313.

It belongs to the class V-like SAM-binding methyltransferase superfamily. In terms of assembly, component of the Set1C/COMPASS complex.

The protein localises to the nucleus. It localises to the chromosome. The catalysed reaction is L-lysyl(4)-[histone H3] + 3 S-adenosyl-L-methionine = N(6),N(6),N(6)-trimethyl-L-lysyl(4)-[histone H3] + 3 S-adenosyl-L-homocysteine + 3 H(+). It carries out the reaction N(6)-methyl-L-lysyl(4)-[histone H3] + S-adenosyl-L-methionine = N(6),N(6)-dimethyl-L-lysyl(4)-[histone H3] + S-adenosyl-L-homocysteine + H(+). The enzyme catalyses N(6),N(6)-dimethyl-L-lysyl(4)-[histone H3] + S-adenosyl-L-methionine = N(6),N(6),N(6)-trimethyl-L-lysyl(4)-[histone H3] + S-adenosyl-L-homocysteine + H(+). Catalytic component of the COMPASS (Set1C) complex that specifically mono-, di- and trimethylates histone H3 to form H3K4me1/2/3. Binds RNAs which might negatively affect its histone methyltransferase activity. COMPASS recognizes ubiquitinated H2B on one face of the nucleosome which stimulates the methylation of H3 on the opposing face. The protein is Histone-lysine N-methyltransferase, H3 lysine-4 specific (set-1) of Neurospora crassa (strain ATCC 24698 / 74-OR23-1A / CBS 708.71 / DSM 1257 / FGSC 987).